Here is a 420-residue protein sequence, read N- to C-terminus: MKKKIFTESKNGYFGEAKGGNHAFGGQYIPEILLPALKELEKAYHGVFVSKAYKKELKSLFKHFVGRPTPLIYAHNASKILKNDIYLKFEGLANTGAHKINNALGQVLLAKHMKKKRVIAETGAGQHGLATAAACARLGLECEIFMGEIDIARQRPNVFNMELFGAKVHSVSSGSKTLKDAVNEALREWSKRSDDSFYVLGSALGPYPYPDIVRDLQSVISKELKKQTKAYFSSLPDILVACVGGGSNAMGFFTHYLKEERVRLIGVEAGGIGDKEGENAIRINTINASEGIAQGYKSLFLQDKDGQLSDTHSISAGLDYAGIGPQLAHLYEVGRVEFQSATDKEALEALSFFAQYEGIIPALESSHALAAVIRLCKDIKGKKIIANISGRGDKDIFITAKALTPEHWKTFLSEEIARIG.

An N6-(pyridoxal phosphate)lysine modification is found at Lys-99.

The protein belongs to the TrpB family. Tetramer of two alpha and two beta chains. The cofactor is pyridoxal 5'-phosphate.

It catalyses the reaction (1S,2R)-1-C-(indol-3-yl)glycerol 3-phosphate + L-serine = D-glyceraldehyde 3-phosphate + L-tryptophan + H2O. The protein operates within amino-acid biosynthesis; L-tryptophan biosynthesis; L-tryptophan from chorismate: step 5/5. Its function is as follows. The beta subunit is responsible for the synthesis of L-tryptophan from indole and L-serine. This is Tryptophan synthase beta chain from Helicobacter hepaticus (strain ATCC 51449 / 3B1).